A 344-amino-acid chain; its full sequence is Beta-1,4-galactosyltransferase 4 (344 aa).

Over 1–12 (MGCNPPYHLSYR) the chain is Cytoplasmic. Residues 13-38 (LRLLLLFTLCLTVVGWATSNYFVGAI) form a helical; Signal-anchor for type II membrane protein membrane-spanning segment. Over 39–344 (QVIPKAKDFM…NITVDFWTAA (306 aa)) the chain is Lumenal. Residues cysteine 77 and cysteine 118 are joined by a disulfide bond. UDP-alpha-D-galactose contacts are provided by residues 129–133 (PHRNR), 168–170 (FNR), and 195–196 (VD). A disulfide bond links cysteine 189 and cysteine 208. Position 196 (aspartate 196) interacts with Mn(2+). N-linked (GlcNAc...) asparagine glycosylation is present at asparagine 220. Tyrosine 224 and tryptophan 256 together coordinate UDP-alpha-D-galactose. 258–261 (GEDD) lines the N-acetyl-D-glucosamine pocket. Histidine 289 contacts Mn(2+). 289–291 (HTR) serves as a coordination point for UDP-alpha-D-galactose. Arginine 301 lines the N-acetyl-D-glucosamine pocket. A glycan (N-linked (GlcNAc...) asparagine) is linked at asparagine 335.

This sequence belongs to the glycosyltransferase 7 family. Interacts with SLC35A2/UGT1. It depends on Mn(2+) as a cofactor.

The protein localises to the golgi apparatus membrane. It localises to the secreted. The enzyme catalyses N-acetyl-D-glucosamine + UDP-alpha-D-galactose = beta-D-galactosyl-(1-&gt;4)-N-acetyl-D-glucosamine + UDP + H(+). It carries out the reaction a beta-D-GlcNAc-(1-&gt;3)-beta-D-Gal-(1-&gt;4)-beta-D-Glc-(1&lt;-&gt;1)-Cer(d18:1(4E)) + UDP-alpha-D-galactose = a neolactoside nLc4Cer(d18:1(4E)) + UDP + H(+). It catalyses the reaction 3-O-{beta-D-galactosyl-(1-&gt;3)-[6-O-sulfo-N-acetyl-beta-D-glucosaminyl-(1-&gt;6)]-N-acetyl-alpha-D-galactosaminyl}-L-seryl-[protein] + UDP-alpha-D-galactose = 3-O-{beta-D-galactosyl-(1-&gt;3)-[beta-D-galactosyl-(1-&gt;4)-6-O-sulfo-N-acetyl-beta-D-glucosaminyl-(1-&gt;6)]-N-acetyl-alpha-D-galactosaminyl}-L-seryl-[protein] + UDP + H(+). The catalysed reaction is 3-O-{beta-D-galactosyl-(1-&gt;3)-[6-O-sulfo-N-acetyl-beta-D-glucosaminyl-(1-&gt;6)]-N-acetyl-alpha-D-galactosaminyl}-L-threonyl-[protein] + UDP-alpha-D-galactose = 3-O-{beta-D-galactosyl-(1-&gt;3)-[beta-D-galactosyl-(1-&gt;4)-6-O-sulfo-N-acetyl-beta-D-glucosaminyl-(1-&gt;6)]-N-acetyl-alpha-D-galactosaminyl}-L-threonyl-[protein] + UDP + H(+). Its pathway is protein modification; protein glycosylation. The protein operates within glycolipid biosynthesis. Functionally, galactose (Gal) transferase involved in the synthesis of terminal N-acetyllactosamine (LacNac) unit present on glycan chains of glycoproteins and glycosphingolipids. Catalyzes the transfer of Gal residue via a beta1-&gt;4 linkage from UDP-Gal to the non-reducing terminal N-acetyl glucosamine 6-O-sulfate (6-O-sulfoGlcNAc) in the linearly growing chain of both N- and O-linked keratan sulfate proteoglycans. Cooperates with B3GNT7 N-acetyl glucosamine transferase and CHST6 and CHST1 sulfotransferases to construct and elongate mono- and disulfated disaccharide units [-&gt;3Galbeta1-&gt;4(6-sulfoGlcNAcbeta)1-&gt;] and [-&gt;3(6-sulfoGalbeta)1-&gt;4(6-sulfoGlcNAcbeta)1-&gt;] within keratan sulfate polymer. Transfers Gal residue via a beta1-&gt;4 linkage to terminal 6-O-sulfoGlcNAc within the LacNac unit of core 2 O-glycans forming 6-sulfo-sialyl-Lewis X (sLex). May contribute to the generation of sLex epitope on mucin-type glycoproteins that serve as ligands for SELL/L-selectin, a major regulator of leukocyte migration. In the biosynthesis pathway of neolacto-series glycosphingolipids, transfers Gal residue via a beta1-&gt;4 linkage to terminal GlcNAc of a lactotriaosylceramide (Lc3Cer) acceptor to form a neolactotetraosylceramide. This Mus musculus (Mouse) protein is Beta-1,4-galactosyltransferase 4.